We begin with the raw amino-acid sequence, 323 residues long: tRNA dimethylallyltransferase (323 aa).

12–19 lines the ATP pocket; it reads GPTAAGKT. 14-19 contacts substrate; the sequence is TAAGKT. Interaction with substrate tRNA stretches follow at residues 37 to 40 and 161 to 165; these read DSAL and QRLIR.

This sequence belongs to the IPP transferase family. As to quaternary structure, monomer. Mg(2+) serves as cofactor.

The enzyme catalyses adenosine(37) in tRNA + dimethylallyl diphosphate = N(6)-dimethylallyladenosine(37) in tRNA + diphosphate. Its function is as follows. Catalyzes the transfer of a dimethylallyl group onto the adenine at position 37 in tRNAs that read codons beginning with uridine, leading to the formation of N6-(dimethylallyl)adenosine (i(6)A). This chain is tRNA dimethylallyltransferase, found in Pseudomonas putida (strain ATCC 700007 / DSM 6899 / JCM 31910 / BCRC 17059 / LMG 24140 / F1).